A 210-amino-acid polypeptide reads, in one-letter code: Orotate phosphoribosyltransferase (210 aa).

5-phospho-alpha-D-ribose 1-diphosphate contacts are provided by residues Arg97, Lys101, His103, and 123–131 (EDLISTGGS). Ser127 contacts orotate.

This sequence belongs to the purine/pyrimidine phosphoribosyltransferase family. PyrE subfamily. As to quaternary structure, homodimer. It depends on Mg(2+) as a cofactor.

The catalysed reaction is orotidine 5'-phosphate + diphosphate = orotate + 5-phospho-alpha-D-ribose 1-diphosphate. The protein operates within pyrimidine metabolism; UMP biosynthesis via de novo pathway; UMP from orotate: step 1/2. In terms of biological role, catalyzes the transfer of a ribosyl phosphate group from 5-phosphoribose 1-diphosphate to orotate, leading to the formation of orotidine monophosphate (OMP). The polypeptide is Orotate phosphoribosyltransferase (Enterococcus faecalis (strain ATCC 700802 / V583)).